Consider the following 235-residue polypeptide: Alpha-S2-casein (235 aa).

The signal sequence occupies residues 1–15 (MKFFIFTCLLAVAFA). Phosphoserine is present on residues S23, S24, S25, S28, S47, S72, S73, S74, S77, S147, S149, and S168. The segment covering 144–158 (EELSTSEEPVSSSQE) has biased composition (polar residues). A disordered region spans residues 144–163 (EELSTSEEPVSSSQEENTKT).

Belongs to the alpha-casein family. In terms of tissue distribution, mammary gland specific. Secreted in milk.

The protein localises to the secreted. In terms of biological role, important role in the capacity of milk to transport calcium phosphate. The chain is Alpha-S2-casein (CSN1S2) from Sus scrofa (Pig).